A 468-amino-acid polypeptide reads, in one-letter code: Membrane-associated tyrosine- and threonine-specific cdc2-inhibitory kinase wee-1.1 (468 aa).

Residues 25-42 show a composition bias toward basic and acidic residues; that stretch reads SKDEPNKLNTSRKLEVTT. A disordered region spans residues 25 to 63; the sequence is SKDEPNKLNTSRKLEVTTKKNQSNNKKRPPPINKARKSL. A compositionally biased stretch (basic residues) spans 49–61; sequence NKKRPPPINKARK. The Protein kinase domain occupies 106 to 357; the sequence is FNFDKNLGKG…SELMKNHVVK (252 aa). ATP contacts are provided by residues 112–120 and Lys135; that span reads LGKGSFGEV. Asp224 (proton acceptor) is an active-site residue. 2 residues coordinate Mg(2+): Asn229 and Asp242. The disordered stretch occupies residues 425 to 453; sequence EDEYEVFSPPRTPVKKSRYQQTMPEVSPP.

The protein belongs to the protein kinase superfamily. Ser/Thr protein kinase family. WEE1 subfamily. In terms of tissue distribution, in the 12-13-cell embryo, expressed in the E blastomere. In the 16-cell embryo, expressed in the eight AB cells.

The protein resides in the nucleus. The enzyme catalyses L-seryl-[protein] + ATP = O-phospho-L-seryl-[protein] + ADP + H(+). The catalysed reaction is L-threonyl-[protein] + ATP = O-phospho-L-threonyl-[protein] + ADP + H(+). Functionally, acts as a negative regulator of entry into mitosis (G2 to M transition) by phosphorylation of the CDK1 kinase. This is Membrane-associated tyrosine- and threonine-specific cdc2-inhibitory kinase wee-1.1 (wee-1.1) from Caenorhabditis elegans.